Here is a 114-residue protein sequence, read N- to C-terminus: Aspartate 1-decarboxylase (114 aa).

The active-site Schiff-base intermediate with substrate; via pyruvic acid is S25. Pyruvic acid (Ser) is present on S25. T57 serves as a coordination point for substrate. Catalysis depends on Y58, which acts as the Proton donor. Residue 73–75 (GAA) participates in substrate binding.

Belongs to the PanD family. In terms of assembly, heterooctamer of four alpha and four beta subunits. The cofactor is pyruvate. In terms of processing, is synthesized initially as an inactive proenzyme, which is activated by self-cleavage at a specific serine bond to produce a beta-subunit with a hydroxyl group at its C-terminus and an alpha-subunit with a pyruvoyl group at its N-terminus.

The protein resides in the cytoplasm. The catalysed reaction is L-aspartate + H(+) = beta-alanine + CO2. It participates in cofactor biosynthesis; (R)-pantothenate biosynthesis; beta-alanine from L-aspartate: step 1/1. Catalyzes the pyruvoyl-dependent decarboxylation of aspartate to produce beta-alanine. In Thermotoga sp. (strain RQ2), this protein is Aspartate 1-decarboxylase.